Reading from the N-terminus, the 585-residue chain is MAEAATGFLEQLKSCIVWSWTYLWTVWFFIVLFLVYILRVPLKINDNLSTVSMFLNTLTPKFYVALTGTSSLISGLILIFEWWYFRKYGTSFIEQVSVSHLRPLLGGVDNNSSNNSNSSNGDSDSNRQSVSECKVWRNPLNLFRGAEYNRYTWVTGREPLTYYDMNLSAQDHQTFFTCDSDHLRPADAIMQKAWRERNPQARISAAHEALEINEIRSRVEVPLIASSTIWEIKLLPKCATAYILLAEEEATTIAEAEKLFKQALKAGDGCYRRSQQLQHHGSQYEAQHRRDTNVLVYIKRRLAMCARRLGRTREAVKMMRDLMKEFPLLSMFNIHENLLEALLELQAYADVQAVLAKYDDISLPKSATICYTAALLKARAVSDKFSPEAASRRGLSTAEMNAVEAIHRAVEFNPHVPKYLLEMKSLILPPEHILKRGDSEAIAYAFFHLAHWKRVEGALNLLHCTWEGTFRMIPYPLEKGHLFYPYPICTETADRELLPSFHEVSVYPKKELPFFILFTAGLCSFTAMLALLTHQFPELMGVFAKAMIDIFCSAEFRDWNCKSIFMRVEDELEIPPAPQSQHFQN.

A helical transmembrane segment spans residues 15–35 (CIVWSWTYLWTVWFFIVLFLV). Asn47 carries an N-linked (GlcNAc...) asparagine glycan. A helical membrane pass occupies residues 62-82 (FYVALTGTSSLISGLILIFEW). Residue Ser386 is modified to Phosphoserine. Residues 512–532 (LPFFILFTAGLCSFTAMLALL) traverse the membrane as a helical segment.

It belongs to the ST7 family.

It is found in the membrane. The sequence is that of Suppressor of tumorigenicity 7 protein (ST7) from Gorilla gorilla gorilla (Western lowland gorilla).